An 81-amino-acid chain; its full sequence is Photosystem I iron-sulfur center (81 aa).

2 consecutive 4Fe-4S ferredoxin-type domains span residues 2–31 (SHAV…MVPW) and 39–68 (IASA…VRVY). [4Fe-4S] cluster is bound by residues C11, C14, C17, C21, C48, C51, C54, and C58.

In terms of assembly, the eukaryotic PSI reaction center is composed of at least 11 subunits. The cofactor is [4Fe-4S] cluster.

The protein resides in the plastid. It is found in the chloroplast thylakoid membrane. The catalysed reaction is reduced [plastocyanin] + hnu + oxidized [2Fe-2S]-[ferredoxin] = oxidized [plastocyanin] + reduced [2Fe-2S]-[ferredoxin]. Functionally, apoprotein for the two 4Fe-4S centers FA and FB of photosystem I (PSI); essential for photochemical activity. FB is the terminal electron acceptor of PSI, donating electrons to ferredoxin. The C-terminus interacts with PsaA/B/D and helps assemble the protein into the PSI complex. Required for binding of PsaD and PsaE to PSI. PSI is a plastocyanin/cytochrome c6-ferredoxin oxidoreductase, converting photonic excitation into a charge separation, which transfers an electron from the donor P700 chlorophyll pair to the spectroscopically characterized acceptors A0, A1, FX, FA and FB in turn. In Ostreococcus tauri, this protein is Photosystem I iron-sulfur center.